The following is a 212-amino-acid chain: ATP-dependent Clp protease proteolytic subunit (212 aa).

The Nucleophile role is filled by Ser-107. The active site involves His-132.

Belongs to the peptidase S14 family. Fourteen ClpP subunits assemble into 2 heptameric rings which stack back to back to give a disk-like structure with a central cavity, resembling the structure of eukaryotic proteasomes.

The protein localises to the cytoplasm. It carries out the reaction Hydrolysis of proteins to small peptides in the presence of ATP and magnesium. alpha-casein is the usual test substrate. In the absence of ATP, only oligopeptides shorter than five residues are hydrolyzed (such as succinyl-Leu-Tyr-|-NHMec, and Leu-Tyr-Leu-|-Tyr-Trp, in which cleavage of the -Tyr-|-Leu- and -Tyr-|-Trp bonds also occurs).. In terms of biological role, cleaves peptides in various proteins in a process that requires ATP hydrolysis. Has a chymotrypsin-like activity. Plays a major role in the degradation of misfolded proteins. In Pseudoalteromonas atlantica (strain T6c / ATCC BAA-1087), this protein is ATP-dependent Clp protease proteolytic subunit.